A 179-amino-acid polypeptide reads, in one-letter code: Prion-like protein doppel (179 aa).

The signal sequence occupies residues 1-25 (MKNRLGTWWVAILCMLLASHLSTVK). A flexible tail region spans residues 27–50 (RGIKHRFKWNRKVLPSSGGQITEA). The interval 51 to 155 (RVAENRPGAF…KHCDFWLERG (105 aa)) is globular. 2 disulfide bridges follow: cysteine 95/cysteine 148 and cysteine 109/cysteine 143. N-linked (GlcNAc...) asparagine glycans are attached at residues asparagine 99 and asparagine 111. Residues 125-142 (KQDSKLHQRVLWRLIKEI) are cu(2+) binding. Glycine 155 is lipidated: GPI-anchor amidated glycine. Residues 156–179 (AALRVAVDQPAMVCLLGFVWFIVK) constitute a propeptide, removed in mature form.

It belongs to the prion family. In terms of processing, N-glycosylated. N-glycosylated at two distinct sites. Post-translationally, O-glycosylated. In terms of tissue distribution, detected in testis. Detected within seminiferous tubules, on round and elongated spermatids (at protein level). Not detected in brain (at protein level). Detected in testis, and at low levels in heart. Expression in brain is very low and barely detectable.

The protein localises to the cell membrane. Functionally, required for normal acrosome reaction and for normal male fertility. Can bind Cu(2+). The sequence is that of Prion-like protein doppel (Prnd) from Mus musculus (Mouse).